Here is a 92-residue protein sequence, read N- to C-terminus: Small ribosomal subunit protein uS19 (92 aa).

This sequence belongs to the universal ribosomal protein uS19 family.

Its function is as follows. Protein S19 forms a complex with S13 that binds strongly to the 16S ribosomal RNA. This is Small ribosomal subunit protein uS19 from Shigella boydii serotype 18 (strain CDC 3083-94 / BS512).